A 59-amino-acid polypeptide reads, in one-letter code: Cecropin-B1 (59 aa).

The signal sequence occupies residues 1 to 23 (MNFNKLFLIVILAALLLLGQTEA). Leu-57 is modified (leucine amide).

It belongs to the cecropin family.

It is found in the secreted. Functionally, cecropins have lytic and antibacterial activity against several Gram-positive and Gram-negative bacteria. In Culex pipiens pipiens (Northern house mosquito), this protein is Cecropin-B1 (CECB1).